Reading from the N-terminus, the 147-residue chain is MKLWVDADACPKVIRETIVRAAERTGVECTFVANHVVPVPKRANIHSLQVPAGFDIADNEIVRRVEPNDLVITSDIPLADEVITKGALALSSRGELYTKDTIKARLNIRDFMETMRSSGIQTGGPAALSQTERREFANHLDRILAKR.

It belongs to the UPF0178 family.

This chain is UPF0178 protein VP2328, found in Vibrio parahaemolyticus serotype O3:K6 (strain RIMD 2210633).